Reading from the N-terminus, the 204-residue chain is High frequency lysogenization protein HflD homolog (204 aa).

The protein belongs to the HflD family.

The protein resides in the cytoplasm. It is found in the cell inner membrane. The sequence is that of High frequency lysogenization protein HflD homolog from Aeromonas hydrophila subsp. hydrophila (strain ATCC 7966 / DSM 30187 / BCRC 13018 / CCUG 14551 / JCM 1027 / KCTC 2358 / NCIMB 9240 / NCTC 8049).